A 190-amino-acid polypeptide reads, in one-letter code: NADH dehydrogenase [ubiquinone] iron-sulfur protein 3 (190 aa).

It belongs to the complex I 30 kDa subunit family. As to quaternary structure, complex I is composed of at least 49 different subunits. This is a component of the iron-sulfur (IP) fragment of the enzyme.

The protein resides in the mitochondrion inner membrane. It carries out the reaction a ubiquinone + NADH + 5 H(+)(in) = a ubiquinol + NAD(+) + 4 H(+)(out). In terms of biological role, core subunit of the mitochondrial membrane respiratory chain NADH dehydrogenase (Complex I) that is believed to belong to the minimal assembly required for catalysis. Complex I functions in the transfer of electrons from NADH to the respiratory chain. The immediate electron acceptor for the enzyme is believed to be ubiquinone. This is NADH dehydrogenase [ubiquinone] iron-sulfur protein 3 (NAD9) from Arabidopsis thaliana (Mouse-ear cress).